Here is a 212-residue protein sequence, read N- to C-terminus: Large ribosomal subunit protein uL3 (212 aa).

Glutamine 153 is modified (N5-methylglutamine).

Belongs to the universal ribosomal protein uL3 family. As to quaternary structure, part of the 50S ribosomal subunit. Forms a cluster with proteins L14 and L19. In terms of processing, methylated by PrmB.

Its function is as follows. One of the primary rRNA binding proteins, it binds directly near the 3'-end of the 23S rRNA, where it nucleates assembly of the 50S subunit. The protein is Large ribosomal subunit protein uL3 of Marinobacter nauticus (strain ATCC 700491 / DSM 11845 / VT8) (Marinobacter aquaeolei).